Reading from the N-terminus, the 176-residue chain is NAD(P)H-quinone oxidoreductase subunit J (176 aa).

This sequence belongs to the complex I 30 kDa subunit family. As to quaternary structure, NDH-1 can be composed of about 15 different subunits; different subcomplexes with different compositions have been identified which probably have different functions.

The protein localises to the cellular thylakoid membrane. It carries out the reaction a plastoquinone + NADH + (n+1) H(+)(in) = a plastoquinol + NAD(+) + n H(+)(out). The catalysed reaction is a plastoquinone + NADPH + (n+1) H(+)(in) = a plastoquinol + NADP(+) + n H(+)(out). Functionally, NDH-1 shuttles electrons from an unknown electron donor, via FMN and iron-sulfur (Fe-S) centers, to quinones in the respiratory and/or the photosynthetic chain. The immediate electron acceptor for the enzyme in this species is believed to be plastoquinone. Couples the redox reaction to proton translocation, and thus conserves the redox energy in a proton gradient. Cyanobacterial NDH-1 also plays a role in inorganic carbon-concentration. The protein is NAD(P)H-quinone oxidoreductase subunit J of Prochlorococcus marinus (strain MIT 9515).